The following is a 308-amino-acid chain: Protein translocase subunit SecF (308 aa).

The next 6 helical transmembrane spans lie at 28 to 48, 140 to 160, 164 to 184, 194 to 214, 246 to 266, and 272 to 292; these read SIILSLISFIWIGIYKFNFGI, IEAGAMAMLFSFLAIMVYIWV, WYFGLGILIALVHDVILALGF, LSTIAAVLTIIGYSVNDSVVI, ILTVITTLLANLALILFGGEA, and VLVFFGIIAGTYSSIFISAPI.

The protein belongs to the SecD/SecF family. SecF subfamily. In terms of assembly, forms a complex with SecD. Part of the essential Sec protein translocation apparatus which comprises SecA, SecYEG and auxiliary proteins SecDF-YajC and YidC.

It is found in the cell inner membrane. In terms of biological role, part of the Sec protein translocase complex. Interacts with the SecYEG preprotein conducting channel. SecDF uses the proton motive force (PMF) to complete protein translocation after the ATP-dependent function of SecA. In Rickettsia felis (strain ATCC VR-1525 / URRWXCal2) (Rickettsia azadi), this protein is Protein translocase subunit SecF.